The chain runs to 215 residues: Inositol diphosphatase DSP1 (215 aa).

Residues 58-209 enclose the Tyrosine-protein phosphatase domain; it reads NFSMVDNGIF…VSSFSHIPMS (152 aa). Positions 114 to 126 are WPD loop important for active site topology; that stretch reads FGIEGNKEPFVNI. 1D-myo-inositol hexakisphosphate contacts are provided by Asn125, Ile126, His129, and Lys130. Cys150 functions as the Phosphocysteine intermediate in the catalytic mechanism.

The protein belongs to the protein-tyrosine phosphatase family. Atypical dual-specificity phosphatase Siw14-like subfamily. Homodimer and homohexamer; behaves as a monomer in solution. Highly expressed in siliques and at lower levels in roots, leaves and flowers.

The catalysed reaction is 5-diphospho-1D-myo-inositol 1,2,3,4,6-pentakisphosphate + H2O = 1D-myo-inositol hexakisphosphate + phosphate + H(+). The enzyme catalyses 1,5-bis(diphospho)-1D-myo-inositol 2,3,4,6-tetrakisphosphate + H2O = 1-diphospho-1D-myo-inositol 2,3,4,5,6-pentakisphosphate + phosphate + 2 H(+). It catalyses the reaction 3,5-bis(diphospho)-1D-myo-inositol 1,2,4,6-tetrakisphosphate + H2O = 3-diphospho-1D-myo-inositol 1,2,4,5,6-pentakisphosphate + phosphate + 2 H(+). It carries out the reaction 6-diphospho-1D-myo-inositol pentakisphosphate + H2O = 1D-myo-inositol hexakisphosphate + phosphate + H(+). The catalysed reaction is 5-diphospho-1D-myo-inositol 1,3,4,6-tetrakisphosphate + H2O = 1D-myo-inositol 1,3,4,5,6-pentakisphosphate + phosphate + H(+). Inhibited by manganese, calcium and zinc ions but not magnesium ions. In terms of biological role, cleaves the beta-phosphate at the 5-position of soluble inositol pyrophosphates. Has highest activity on 5-diphosphoinositol 1,2,3,4,6-pentakisphosphate (5-InsP(7)), 1,5-bis-diphosphoinositol 2,3,4,6-tetrakisphosphate (1,5-InsP(8)) and 3,5-InsP(8), but has weak activity against 1-diphosphoinositol 2,3,4,5,6-pentakisphosphate (1-InsP(7)). Dephosphorylates the phosphoinositides PI(3,4,5)P3, PI(3,5)P2, but not PI(3)P, PI(3,4)P2 or PI(4,5)P2. Possesses phosphotyrosine phosphatase activity in vitro, and can hydrolyze para-nitrophenyl phosphate, O-methylfluorescein phosphate, polyphosphate and ATP. In Arabidopsis thaliana (Mouse-ear cress), this protein is Inositol diphosphatase DSP1.